Here is a 239-residue protein sequence, read N- to C-terminus: Sugar fermentation stimulation protein homolog (239 aa).

Belongs to the SfsA family.

The chain is Sugar fermentation stimulation protein homolog from Maridesulfovibrio salexigens (strain ATCC 14822 / DSM 2638 / NCIMB 8403 / VKM B-1763) (Desulfovibrio salexigens).